The chain runs to 97 residues: Small ribosomal subunit protein bS20 (97 aa).

The protein belongs to the bacterial ribosomal protein bS20 family.

Functionally, binds directly to 16S ribosomal RNA. The polypeptide is Small ribosomal subunit protein bS20 (Prochlorococcus marinus (strain MIT 9215)).